The following is a 609-amino-acid chain: Thiamine metabolism regulatory protein THI3 (609 aa).

Residues 578–598 (SKQVQEENENSSAVNTPTPEF) are disordered.

It belongs to the TPP enzyme family. It depends on Mg(2+) as a cofactor. The cofactor is thiamine diphosphate.

The protein localises to the nucleus. It carries out the reaction 4-methyl-2-oxopentanoate + H(+) = 3-methylbutanal + CO2. The enzyme catalyses (S)-3-methyl-2-oxopentanoate + H(+) = 2-methylbutanal + CO2. It functions in the pathway amino-acid degradation; Ehrlich pathway. Its function is as follows. One of five 2-oxo acid decarboxylases (PDC1, PDC5, PDC6, ARO10, and THI3) involved in amino acid catabolism. The enzyme catalyzes the decarboxylation of amino acids, which, in a first step, have been transaminated to the corresponding 2-oxo acids (alpha-keto-acids). In a third step, the resulting aldehydes are reduced to alcohols, collectively referred to as fusel oils or alcohols. Its preferred substrates are the transaminated amino acids derived from leucine (4-methyl-2-oxopentanoate, also alpha-keto-isocaproate) and isoleucine ((3S)-3-methyl-2-oxopentanoate, also alpha-keto-beta-methylvalerate), whereas transaminated valine, transaminated aromatic amino acids, and pyruvate are no substrates. In analogy to the pyruvate decarboxylases the enzyme may in a side-reaction catalyze condensation (or carboligation) reactions leading to the formation of 2-hydroxy ketone, collectively called acyloins. The enzyme is also positively regulating the thiamine metabolism by a molecular mechanism that may involve thiamine concentration sensing and signal transmission. The chain is Thiamine metabolism regulatory protein THI3 (THI3) from Saccharomyces cerevisiae (strain ATCC 204508 / S288c) (Baker's yeast).